A 389-amino-acid chain; its full sequence is MVSRPHGGRLVDRTVSDKRRERLREEARELPAIRLTAGLAADVANIAHGVYSPLEGFMLQEDYLSVLDEMRLSNDLPWTIPIILDVDPGEIAGVREGDDIALVYNGKPIALMRVEEIYGWDRKEYAAKVFKTTDPAHPGVAKTMKRKELLIGGPIDLIEDPPEPFERYRLWPKETRVLFKARGWKTIAAFQTRNVPHLGHEYVQKAALTFTDGLFVNPLVGWKKPGDYRDEVIVEAYQALIKHYFPVESVVFSVLRMEMRYAGPREAIHHAIVRKNFGATHFIVGRDHAGVGNYYGPYEAWELFREFPDLGITPLFVREAFYCRKCGQMVNEKICPHPEEYRVRISGTKLRRMLLEGQRPPEYMMRPEVVDVVLKHPNPFIEGDEAFQE.

Belongs to the sulfate adenylyltransferase family.

It catalyses the reaction sulfate + ATP + H(+) = adenosine 5'-phosphosulfate + diphosphate. Its pathway is sulfur metabolism; hydrogen sulfide biosynthesis; sulfite from sulfate: step 1/3. This is Sulfate adenylyltransferase from Hyperthermus butylicus (strain DSM 5456 / JCM 9403 / PLM1-5).